The primary structure comprises 75 residues: UPF0352 protein YejL (75 aa).

It belongs to the UPF0352 family.

The chain is UPF0352 protein YejL from Shigella sonnei (strain Ss046).